Here is a 254-residue protein sequence, read N- to C-terminus: Ribosomal protein L11 methyltransferase (254 aa).

S-adenosyl-L-methionine is bound by residues Thr107, Gly128, Asp149, Ser175, and Asn191.

Belongs to the methyltransferase superfamily. PrmA family.

Its subcellular location is the cytoplasm. The catalysed reaction is L-lysyl-[protein] + 3 S-adenosyl-L-methionine = N(6),N(6),N(6)-trimethyl-L-lysyl-[protein] + 3 S-adenosyl-L-homocysteine + 3 H(+). It catalyses the reaction an N-terminal L-alpha-aminoacyl-[protein] + 3 S-adenosyl-L-methionine = an N-terminal trimethyl-L-alpha-aminoacyl-[protein] + 3 S-adenosyl-L-homocysteine + 3 H(+). Its function is as follows. Methylates ribosomal protein L11. Preferentially recognizes free L11 before its incorporation into 50S subunits. This function is dispensable for growth and thermostability. In Thermus thermophilus (strain ATCC 27634 / DSM 579 / HB8), this protein is Ribosomal protein L11 methyltransferase.